Consider the following 329-residue polypeptide: 4-hydroxythreonine-4-phosphate dehydrogenase (329 aa).

Residues histidine 136 and threonine 137 each contribute to the substrate site. 3 residues coordinate a divalent metal cation: histidine 166, histidine 211, and histidine 266. Residues lysine 274, asparagine 283, and arginine 292 each coordinate substrate.

It belongs to the PdxA family. Homodimer. Zn(2+) is required as a cofactor. Mg(2+) serves as cofactor. The cofactor is Co(2+).

The protein resides in the cytoplasm. The catalysed reaction is 4-(phosphooxy)-L-threonine + NAD(+) = 3-amino-2-oxopropyl phosphate + CO2 + NADH. It functions in the pathway cofactor biosynthesis; pyridoxine 5'-phosphate biosynthesis; pyridoxine 5'-phosphate from D-erythrose 4-phosphate: step 4/5. In terms of biological role, catalyzes the NAD(P)-dependent oxidation of 4-(phosphooxy)-L-threonine (HTP) into 2-amino-3-oxo-4-(phosphooxy)butyric acid which spontaneously decarboxylates to form 3-amino-2-oxopropyl phosphate (AHAP). This Escherichia coli (strain SE11) protein is 4-hydroxythreonine-4-phosphate dehydrogenase.